Consider the following 314-residue polypeptide: Olfactory receptor 5P62 (314 aa).

The Extracellular portion of the chain corresponds to 1 to 28 (MAFIYNGSQTTVTEFILLGLTDDPVLKV). Asn6 carries N-linked (GlcNAc...) asparagine glycosylation. The chain crosses the membrane as a helical span at residues 29 to 49 (ILFCIILCIYLVTVFGNLSTI). Topologically, residues 50–57 (LLIGVSSK) are cytoplasmic. A helical membrane pass occupies residues 58-78 (LHHPMYFFLSHLASVDMGLSS). Over 79–102 (SVTPNMLVNFLTEKNTISYLGCGI) the chain is Extracellular. Residues Cys100 and Cys192 are joined by a disulfide bond. The chain crosses the membrane as a helical span at residues 103 to 123 (QLSSAAFFGAVEFFLLAAMAY). Over 124–136 (DRLVAICNPLLYS) the chain is Cytoplasmic. A helical transmembrane segment spans residues 137 to 157 (TKMSSQVCIQLVAGSYVGGFL). The Extracellular portion of the chain corresponds to 158 to 199 (NASFVTHFFFSFLFCGPNRVNHFFCDLSPMMELSCSDVSISE). Residues 200–220 (IVISFSAGSFTMTTLFVIVIP) form a helical membrane-spanning segment. The Cytoplasmic segment spans residues 221-240 (YFYIFITILKIRSTEGRQKA). A helical transmembrane segment spans residues 241 to 261 (FSTCTSHLTAVTLYYGTIIFI). Residues 262 to 274 (YVMPKSTYSRDQN) lie on the Extracellular side of the membrane. Residues 275-295 (KVVSLFYMLVIPVLNPLIYSL) traverse the membrane as a helical segment. At 296 to 314 (RNNEIKDALKRQFYRKTLL) the chain is on the cytoplasmic side.

The protein belongs to the G-protein coupled receptor 1 family.

The protein resides in the cell membrane. Functionally, potential odorant receptor. This is Olfactory receptor 5P62 from Mus musculus (Mouse).